Here is a 394-residue protein sequence, read N- to C-terminus: RNA-binding motif protein, X-linked-like-2 (394 aa).

Residues 8–86 (GKLFIGGLNL…KAIKVAQATK (79 aa)) form the RRM domain. A compositionally biased stretch (basic and acidic residues) spans 67–78 (RDMNGKSLDGKA). The segment at 67–394 (RDMNGKSLDG…MERGGGRSRY (328 aa)) is disordered. Pro residues predominate over residues 150–165 (RGPPPPPRRAGPPPKR). Basic and acidic residues-rich tracts occupy residues 196-231 (PRRE…REPR) and 239-285 (EYTH…REPF). Low complexity predominate over residues 321–333 (YSGGRDSYSSSYG). Basic and acidic residues-rich tracts occupy residues 334 to 350 (RSDR…RPDR) and 383 to 394 (GRMERGGGRSRY).

It is found in the nucleus. The sequence is that of RNA-binding motif protein, X-linked-like-2 (RBMXL2) from Macaca fascicularis (Crab-eating macaque).